Reading from the N-terminus, the 507-residue chain is MSQLVLILGDQLSPSIAALDGVDKKQDTIVLCEVMAEASYVGHHKKKIAFIFSAMRHFAEELRGEGYRVRYTRIDDADNAGSFTGEVKRAIDDLTPSRICVTEPGEWRVRSEMDGFAGAFGIQVDIRSDRRFLSSHGEFRNWAAGRKSLTMEYFYREMRRKTGLLMNGEQPVGGRWNFDAENRQPARPDLLRPKHPVFAPDKITKEVIDTVERLFPDNFGKLENFGFAVTRTDAERALSAFIDDFLCNFGATQDAMLQDDPNLNHSLLSFYINCGLLDALDVCKAAERAYHEGGAPLNAVEGFIRQIIGWREYMRGIYWLAGPDYVDSNFFENDRSLPVFYWTGKTHMNCMAKVITETIENAYAHHIQRLMITGNFALLAGIDPKAVHRWYLEVYADAYEWVELPNVIGMSQFADGGFLGTKPYAASGNYINRMSDYCDTCRYDPKERLGDNACPFNALYWDFLARNREKLKSNHRLAQPYATWARMSEDVRHDLRAKAAAFLRKLD.

6,7-dimethyl-8-(1-D-ribityl)lumazine-binding positions include 9–10 (GD), 32–40 (CEVMAEASY), and glycine 105. Residues 265–269 (HSLLS) and asparagine 273 contribute to the FAD site. Cysteine 350 is a [4Fe-4S] cluster binding site. FAD is bound by residues 363–366 (YAHH), aspartate 397, and asparagine 406. Cysteine 438, cysteine 441, and cysteine 454 together coordinate [4Fe-4S] cluster.

It belongs to the iron-sulfur bacterial cryptochrome/photolyase (FeS-BCP) family. Requires FAD as cofactor. It depends on 6,7-dimethyl-8-(1-D-ribityl)lumazine as a cofactor. [4Fe-4S] cluster serves as cofactor.

It carries out the reaction (6-4) photoproduct (in DNA) = 2 pyrimidine residues (in DNA).. Its function is as follows. Photolyase involved in the repair of UV-induced (6-4) lesions in DNA. Catalyzes the photoreactivation of (6-4) pyrimidine-pyrimidone photoproducts by using blue-light energy. Can repair (6-4) photoproducts in ssDNA as well as in dsDNA. The chain is (6-4) photolyase from Agrobacterium fabrum (strain C58 / ATCC 33970) (Agrobacterium tumefaciens (strain C58)).